We begin with the raw amino-acid sequence, 285 residues long: Acetylglutamate kinase (285 aa).

Residues 64 to 65 (GG), R86, and N180 contribute to the substrate site.

The protein belongs to the acetylglutamate kinase family. ArgB subfamily.

It is found in the plastid. Its subcellular location is the chloroplast. The enzyme catalyses N-acetyl-L-glutamate + ATP = N-acetyl-L-glutamyl 5-phosphate + ADP. Its pathway is amino-acid biosynthesis; L-arginine biosynthesis; N(2)-acetyl-L-ornithine from L-glutamate: step 2/4. Its function is as follows. Catalyzes the ATP-dependent phosphorylation of N-acetyl-L-glutamate. This Gracilaria tenuistipitata var. liui (Red alga) protein is Acetylglutamate kinase.